The chain runs to 680 residues: Chaperone protein dnaK3 (680 aa).

Thr-205 is subject to Phosphothreonine; by autocatalysis. The disordered stretch occupies residues 640–680 (GRERRRDDDEDEWAEPPRTRRSRSYSQRADSAPWDDWDDDW).

The protein belongs to the heat shock protein 70 family.

Functionally, acts as a chaperone. The sequence is that of Chaperone protein dnaK3 (dnaK3) from Thermosynechococcus vestitus (strain NIES-2133 / IAM M-273 / BP-1).